The following is an 828-amino-acid chain: Periplasmic nitrate reductase (828 aa).

Positions 1–31 (MKLSRRSFMKANAVAAAAAAAGLSVPGVARA) form a signal peptide, tat-type signal. The 57-residue stretch at 39-95 (IKWDKAPCRFCGTGCGVLVGTQQGRVVACQGDPDAPVNRGLNCIKGYFLPKIMYGKD) folds into the 4Fe-4S Mo/W bis-MGD-type domain. [4Fe-4S] cluster contacts are provided by Cys46, Cys49, Cys53, and Cys81. Residues Lys83, Gln150, Asn175, Cys179, 212–219 (WGSNMAEM), 243–247 (STYQH), 262–264 (QSD), Met372, Gln376, Asn482, 508–509 (SD), Lys531, Asp558, and 718–727 (TGRVLEHWHT) each bind Mo-bis(molybdopterin guanine dinucleotide). Phe794 lines the substrate pocket. 2 residues coordinate Mo-bis(molybdopterin guanine dinucleotide): Asn802 and Lys819.

It belongs to the prokaryotic molybdopterin-containing oxidoreductase family. NasA/NapA/NarB subfamily. As to quaternary structure, component of the periplasmic nitrate reductase NapAB complex composed of NapA and NapB. The cofactor is [4Fe-4S] cluster. Mo-bis(molybdopterin guanine dinucleotide) is required as a cofactor. Predicted to be exported by the Tat system. The position of the signal peptide cleavage has not been experimentally proven.

It localises to the periplasm. It carries out the reaction 2 Fe(II)-[cytochrome] + nitrate + 2 H(+) = 2 Fe(III)-[cytochrome] + nitrite + H2O. Catalytic subunit of the periplasmic nitrate reductase complex NapAB. Receives electrons from NapB and catalyzes the reduction of nitrate to nitrite. This Escherichia coli O81 (strain ED1a) protein is Periplasmic nitrate reductase.